A 379-amino-acid chain; its full sequence is Protein RecA (379 aa).

Positions 1 to 24 are disordered; that stretch reads MSVDVKSAQSSKSDSLQAEPRPGE. Positions 7–16 are enriched in polar residues; sequence SAQSSKSDSL. Residue 84–91 coordinates ATP; it reads GPESSGKT.

The protein belongs to the RecA family.

It localises to the cytoplasm. Can catalyze the hydrolysis of ATP in the presence of single-stranded DNA, the ATP-dependent uptake of single-stranded DNA by duplex DNA, and the ATP-dependent hybridization of homologous single-stranded DNAs. It interacts with LexA causing its activation and leading to its autocatalytic cleavage. This Prochlorococcus marinus (strain MIT 9303) protein is Protein RecA.